The following is a 447-amino-acid chain: UDP-N-acetylmuramate--L-alanine ligase (447 aa).

Position 108–114 (108–114) interacts with ATP; that stretch reads GSHGKTS.

Belongs to the MurCDEF family.

It localises to the cytoplasm. It catalyses the reaction UDP-N-acetyl-alpha-D-muramate + L-alanine + ATP = UDP-N-acetyl-alpha-D-muramoyl-L-alanine + ADP + phosphate + H(+). It functions in the pathway cell wall biogenesis; peptidoglycan biosynthesis. Its function is as follows. Cell wall formation. The sequence is that of UDP-N-acetylmuramate--L-alanine ligase from Listeria monocytogenes serotype 4b (strain F2365).